The following is a 470-amino-acid chain: Uronate isomerase (470 aa).

It belongs to the metallo-dependent hydrolases superfamily. Uronate isomerase family.

It carries out the reaction D-glucuronate = D-fructuronate. The enzyme catalyses aldehydo-D-galacturonate = keto-D-tagaturonate. It functions in the pathway carbohydrate metabolism; pentose and glucuronate interconversion. This chain is Uronate isomerase, found in Vibrio vulnificus (strain YJ016).